We begin with the raw amino-acid sequence, 219 residues long: Cytidylate kinase (219 aa).

10-18 contributes to the ATP binding site; sequence GPAAAGKST.

Belongs to the cytidylate kinase family. Type 1 subfamily.

It is found in the cytoplasm. The catalysed reaction is CMP + ATP = CDP + ADP. It catalyses the reaction dCMP + ATP = dCDP + ADP. The polypeptide is Cytidylate kinase (Staphylococcus aureus (strain JH9)).